We begin with the raw amino-acid sequence, 269 residues long: 3-methyl-2-oxobutanoate hydroxymethyltransferase (269 aa).

Mg(2+)-binding residues include aspartate 48 and aspartate 87. 3-methyl-2-oxobutanoate is bound by residues 48 to 49, aspartate 87, and lysine 117; that span reads DS. Position 119 (glutamate 119) interacts with Mg(2+). Glutamate 186 acts as the Proton acceptor in catalysis.

This sequence belongs to the PanB family. In terms of assembly, homodecamer; pentamer of dimers. Requires Mg(2+) as cofactor.

The protein resides in the cytoplasm. The enzyme catalyses 3-methyl-2-oxobutanoate + (6R)-5,10-methylene-5,6,7,8-tetrahydrofolate + H2O = 2-dehydropantoate + (6S)-5,6,7,8-tetrahydrofolate. It participates in cofactor biosynthesis; (R)-pantothenate biosynthesis; (R)-pantoate from 3-methyl-2-oxobutanoate: step 1/2. Functionally, catalyzes the reversible reaction in which hydroxymethyl group from 5,10-methylenetetrahydrofolate is transferred onto alpha-ketoisovalerate to form ketopantoate. The sequence is that of 3-methyl-2-oxobutanoate hydroxymethyltransferase from Moorella thermoacetica (strain ATCC 39073 / JCM 9320).